We begin with the raw amino-acid sequence, 414 residues long: Gamma-glutamyl phosphate reductase (414 aa).

The protein belongs to the gamma-glutamyl phosphate reductase family.

It localises to the cytoplasm. The catalysed reaction is L-glutamate 5-semialdehyde + phosphate + NADP(+) = L-glutamyl 5-phosphate + NADPH + H(+). The protein operates within amino-acid biosynthesis; L-proline biosynthesis; L-glutamate 5-semialdehyde from L-glutamate: step 2/2. Its function is as follows. Catalyzes the NADPH-dependent reduction of L-glutamate 5-phosphate into L-glutamate 5-semialdehyde and phosphate. The product spontaneously undergoes cyclization to form 1-pyrroline-5-carboxylate. This Xanthomonas axonopodis pv. citri (strain 306) protein is Gamma-glutamyl phosphate reductase.